We begin with the raw amino-acid sequence, 264 residues long: Methylthioribulose-1-phosphate dehydratase (264 aa).

Cys110 contacts substrate. Zn(2+) is bound by residues His128 and His130. The active-site Proton donor/acceptor is the Glu151. His213 contributes to the Zn(2+) binding site.

This sequence belongs to the aldolase class II family. MtnB subfamily. It depends on Zn(2+) as a cofactor.

It localises to the cytoplasm. The enzyme catalyses 5-(methylsulfanyl)-D-ribulose 1-phosphate = 5-methylsulfanyl-2,3-dioxopentyl phosphate + H2O. It functions in the pathway amino-acid biosynthesis; L-methionine biosynthesis via salvage pathway; L-methionine from S-methyl-5-thio-alpha-D-ribose 1-phosphate: step 2/6. Functionally, catalyzes the dehydration of methylthioribulose-1-phosphate (MTRu-1-P) into 2,3-diketo-5-methylthiopentyl-1-phosphate (DK-MTP-1-P). The chain is Methylthioribulose-1-phosphate dehydratase from Vanderwaltozyma polyspora (strain ATCC 22028 / DSM 70294 / BCRC 21397 / CBS 2163 / NBRC 10782 / NRRL Y-8283 / UCD 57-17) (Kluyveromyces polysporus).